The sequence spans 524 residues: MTITYTQAFAKNFLGNAPGWYKIAILAFLIINPLVFSLSPFYAGWLLVIEFIFTLAMALKCYPLQPGGLLALEAVFIGMTSPEKIAHEVAANLEVLLLLIFMVAGIYFMKQLLLFVFTKLLLNIRSKIVLSLAFCLAAAFLSAFLDALTVIAVVISVAVGFYGIYHQVASGGGSNVALSDDSLLTDSAKRDALDQFRAFLRSLLMHAGVGTALGGVMTMVGEPQNLIIAKNADWHFVSFLLRMAPVTVPVFCCGILTCYLVERFSLFGYGAQLPDRVRQILLNFDRESTNSRSRQDKLRLMIQALVGVWLVSALAFHLAEVGLIGLSVIVLVTSLCGVTDEHLIGKAFQESLPFTALLTVFFSIVAVIIDQHLFTPVIQFVLQSPPDRQLTLFYLFNGLLSSISDNVFVGTVYIHEAKAALESGAISLKQFELLAVAINTGTNLPSVATPNGQAAFLFLLTSALAPLIRLSYGRMVWMALPYTVVMTLVGLLCVIFTLEPATQLMSQWHLLTLPPAQDVLSSGL.

The next 12 membrane-spanning stretches (helical) occupy residues 23-43 (IAIL…PFYA), 44-64 (GWLL…CYPL), 97-117 (LLLI…LFVF), 120-140 (LLLN…AAAF), 144-164 (FLDA…FYGI), 203-223 (LLMH…VGEP), 236-256 (FVSF…CGIL), 304-324 (ALVG…VGLI), 354-374 (FTAL…QHLF), 392-412 (LFYL…VGTV), 448-468 (ATPN…APLI), and 476-496 (VWMA…CVIF).

It belongs to the NhaB Na(+)/H(+) (TC 2.A.34) antiporter family.

It localises to the cell inner membrane. It catalyses the reaction 2 Na(+)(in) + 3 H(+)(out) = 2 Na(+)(out) + 3 H(+)(in). In terms of biological role, na(+)/H(+) antiporter that extrudes sodium in exchange for external protons. This Edwardsiella ictaluri (strain 93-146) protein is Na(+)/H(+) antiporter NhaB.